The following is a 91-amino-acid chain: Small ribosomal subunit protein bS16 (91 aa).

It belongs to the bacterial ribosomal protein bS16 family.

In Enterococcus faecalis (strain ATCC 700802 / V583), this protein is Small ribosomal subunit protein bS16.